The following is a 689-amino-acid chain: Acetyl-coenzyme A synthetase 2-like, mitochondrial (689 aa).

The transit peptide at 1–37 directs the protein to the mitochondrion; that stretch reads MAARTLGRGVGRLLGSLRGLSGQPARPPCGVSAPRRA. A disordered region spans residues 17–46; it reads LRGLSGQPARPPCGVSAPRRAASGPSGSAP. The segment covering 32–46 has biased composition (low complexity); sequence SAPRRAASGPSGSAP. CoA-binding positions include 224–227 and threonine 341; that span reads RGGR. N6-acetyllysine is present on lysine 396. Residues 417-419, 441-446, aspartate 533, and arginine 548 contribute to the ATP site; these read GEP and DTWWQT. Residue serine 556 participates in CoA binding. Residue arginine 559 coordinates ATP. Lysine 642 is modified (N6-acetyllysine).

The protein belongs to the ATP-dependent AMP-binding enzyme family. Interacts with SIRT3. Reversibly acetylated on Lys-642. The acetyl-CoA synthase activity is inhibited by acetylation and activated by deacetylation mediated by the deacetylase SIRT3.

Its subcellular location is the mitochondrion matrix. The enzyme catalyses acetate + ATP + CoA = acetyl-CoA + AMP + diphosphate. It catalyses the reaction propanoate + ATP + CoA = propanoyl-CoA + AMP + diphosphate. Its activity is regulated as follows. Inhibited by acetylation at Lys-642 and activated by deacetylation mediated by the deacetylase SIRT3. In terms of biological role, catalyzes the synthesis of acetyl-CoA from short-chain fatty acids. Acetate is the preferred substrate. Can also utilize propionate with a much lower affinity. Provides acetyl-CoA that is utilized mainly for oxidation under ketogenic conditions. Involved in thermogenesis under ketogenic conditions, using acetate as a vital fuel when carbohydrate availability is insufficient. This is Acetyl-coenzyme A synthetase 2-like, mitochondrial (ACSS1) from Homo sapiens (Human).